The sequence spans 273 residues: Epithelial sodium channel subunit beta (273 aa).

Residues 1-245 (NCYIFNWGQE…RSISESPTTN (245 aa)) are Extracellular-facing. Intrachain disulfides connect Cys-92–Cys-179, Cys-117–Cys-175, Cys-121–Cys-171, Cys-130–Cys-157, and Cys-132–Cys-146. The helical transmembrane segment at 246–273 (VVWLLSNLGGQFGFWMGGSVLCIIEFGE) threads the bilayer.

It belongs to the amiloride-sensitive sodium channel (TC 1.A.6) family. SCNN1B subfamily. As to quaternary structure, component of the heterotrimeric epithelial sodium channel (ENaC) composed of an alpha/SCNN1A, a beta/SCNN1B and a gamma/SCNN1G subunit.

The protein resides in the apical cell membrane. The protein localises to the cytoplasmic vesicle membrane. It catalyses the reaction Na(+)(in) = Na(+)(out). Originally identified and characterized by its inhibition by the diuretic drug amiloride. Its function is as follows. This is one of the three pore-forming subunits of the heterotrimeric epithelial sodium channel (ENaC), a critical regulator of sodium balance and fluid homeostasis. ENaC operates in epithelial tissues, where it mediates the electrodiffusion of sodium ions from extracellular fluid through the apical membrane of cells, with water following osmotically. It plays a key role in maintaining sodium homeostasis through electrogenic sodium reabsorption in the kidneys. Additionally, ENaC is essential for airway surface liquid homeostasis, which is crucial for proper mucus clearance. In Aquarana catesbeiana (American bullfrog), this protein is Epithelial sodium channel subunit beta.